A 275-amino-acid chain; its full sequence is Elongation factor Ts (275 aa).

The interval Thr76 to Val79 is involved in Mg(2+) ion dislocation from EF-Tu.

The protein belongs to the EF-Ts family.

It is found in the cytoplasm. Functionally, associates with the EF-Tu.GDP complex and induces the exchange of GDP to GTP. It remains bound to the aminoacyl-tRNA.EF-Tu.GTP complex up to the GTP hydrolysis stage on the ribosome. The chain is Elongation factor Ts from Mycobacterium avium (strain 104).